Here is a 205-residue protein sequence, read N- to C-terminus: Probable GTP-binding protein EngB (205 aa).

Positions 27 to 201 (QGMEVAFAGR…QNKLNAWFSG (175 aa)) constitute an EngB-type G domain. GTP is bound by residues 35–42 (GRSNAGKS), 62–66 (GRTQL), 80–83 (DLPG), 147–150 (TKVD), and 180–182 (FSS). Residues S42 and T64 each contribute to the Mg(2+) site.

This sequence belongs to the TRAFAC class TrmE-Era-EngA-EngB-Septin-like GTPase superfamily. EngB GTPase family. Mg(2+) is required as a cofactor.

Its function is as follows. Necessary for normal cell division and for the maintenance of normal septation. This Hamiltonella defensa subsp. Acyrthosiphon pisum (strain 5AT) protein is Probable GTP-binding protein EngB.